Consider the following 178-residue polypeptide: Large ribosomal subunit protein uL13m (178 aa).

The protein belongs to the universal ribosomal protein uL13 family. In terms of assembly, component of the mitochondrial ribosome large subunit (39S) which comprises a 16S rRNA and about 50 distinct proteins.

The protein resides in the mitochondrion. The protein is Large ribosomal subunit protein uL13m (mRpL13) of Drosophila melanogaster (Fruit fly).